The primary structure comprises 389 residues: 8-amino-7-oxononanoate synthase (389 aa).

A substrate-binding site is contributed by arginine 19. Pyridoxal 5'-phosphate is bound at residue 106–107 (GY). Histidine 131 provides a ligand contact to substrate. Positions 176, 204, and 233 each coordinate pyridoxal 5'-phosphate. Position 236 is an N6-(pyridoxal phosphate)lysine (lysine 236). Residue threonine 350 participates in substrate binding.

Belongs to the class-II pyridoxal-phosphate-dependent aminotransferase family. BioF subfamily. As to quaternary structure, homodimer. It depends on pyridoxal 5'-phosphate as a cofactor.

It carries out the reaction 6-carboxyhexanoyl-[ACP] + L-alanine + H(+) = (8S)-8-amino-7-oxononanoate + holo-[ACP] + CO2. The protein operates within cofactor biosynthesis; biotin biosynthesis. Catalyzes the decarboxylative condensation of pimeloyl-[acyl-carrier protein] and L-alanine to produce 8-amino-7-oxononanoate (AON), [acyl-carrier protein], and carbon dioxide. The protein is 8-amino-7-oxononanoate synthase of Ectopseudomonas mendocina (strain ymp) (Pseudomonas mendocina).